The chain runs to 472 residues: Nucleoporin NUP49/NSP49 (472 aa).

The stretch at 2–3 is one FG 1 repeat; sequence FG. The GLFG 1 repeat unit spans residues 14 to 17; sequence GLFG. The interval 28–104 is disordered; that stretch reads NTGFSFGGTQ…TANTGGGLFG (77 aa). The FG 2 repeat unit spans residues 33–34; the sequence is FG. A GLFG 2 repeat occupies 48 to 51; sequence GLFG. Residues 64–80 are compositionally biased toward low complexity; the sequence is SFGQQQQQSQTNAFGGS. FG repeat units lie at residues 65–66 and 77–78; these read FG. GLFG repeat units lie at residues 86 to 89 and 101 to 104; these read GLFG. Residues 113–116 form an SLFG 1 repeat; sequence SLFG. 2 GLFG repeats span residues 125–128 and 148–151; these read GLFG. An SLFG 2 repeat occupies 159–162; that stretch reads SLFG. Residues 175-178 form a GLFG 7; approximate repeat; sequence GMFG. Residues 185 to 188 form an SLFG 3 repeat; sequence SLFG. The GLFG 8 repeat unit spans residues 199-202; that stretch reads GLFG. An SLFG 4 repeat occupies 210–213; sequence SLFG. Residues 211–242 form a disordered region; the sequence is LFGSSNNNNNNNNSNNIMSASGGLFGNQQQQL. Low complexity predominate over residues 214-226; the sequence is SSNNNNNNNNSNN. Residues 233–236 form a GLFG 9 repeat; the sequence is GLFG.

It belongs to the nucleoporin GLFG family. In terms of assembly, component of the nuclear pore complex (NPC). NPC constitutes the exclusive means of nucleocytoplasmic transport. NPCs allow the passive diffusion of ions and small molecules and the active, nuclear transport receptor-mediated bidirectional transport of macromolecules such as proteins, RNAs, ribonucleoparticles (RNPs), and ribosomal subunits across the nuclear envelope. Due to its 8-fold rotational symmetry, all subunits are present with 8 copies or multiples thereof. NUP49 is part of the NUP57 subcomplex (NIC96, NSP1, NUP49, NUP57) interacting with NUP57. Interacts through its FG repeats with karyopherins.

It is found in the nucleus. It localises to the nuclear pore complex. Its subcellular location is the nucleus membrane. Its function is as follows. Functions as a component of the nuclear pore complex (NPC). NPC components, collectively referred to as nucleoporins (NUPs), can play the role of both NPC structural components and of docking or interaction partners for transiently associated nuclear transport factors. Active directional transport is assured by both, a Phe-Gly (FG) repeat affinity gradient for these transport factors across the NPC and a transport cofactor concentration gradient across the nuclear envelope (GSP1 and GSP2 GTPases associated predominantly with GTP in the nucleus, with GDP in the cytoplasm). NUP49 plays an important role in several nuclear transport pathways including poly(A)+ RNA, tRNA, and pre-ribosome transport. The sequence is that of Nucleoporin NUP49/NSP49 (NUP49) from Saccharomyces cerevisiae (strain ATCC 204508 / S288c) (Baker's yeast).